Consider the following 371-residue polypeptide: DNA primase DnaG (371 aa).

Residues 173–248 (DEIILVEGRA…DIDYVAVAPP (76 aa)) enclose the Toprim domain. Mg(2+) is bound by residues E179, D221, and D223.

The protein belongs to the archaeal DnaG primase family. Forms a ternary complex with MCM helicase and DNA. Component of the archaeal exosome complex. The cofactor is Mg(2+).

The enzyme catalyses ssDNA + n NTP = ssDNA/pppN(pN)n-1 hybrid + (n-1) diphosphate.. In terms of biological role, RNA polymerase that catalyzes the synthesis of short RNA molecules used as primers for DNA polymerase during DNA replication. Also part of the exosome, which is a complex involved in RNA degradation. Acts as a poly(A)-binding protein that enhances the interaction between heteromeric, adenine-rich transcripts and the exosome. This is DNA primase DnaG from Nanoarchaeum equitans (strain Kin4-M).